The following is a 374-amino-acid chain: MDLLGAAKPQWPWRRCLAGLLFQLLVAVCFFSYLRVSRDDATGSPRPRLMAVEPVTGAPNGSRCQDSMAAPARPTLLILLWTWPFNTPVALPRCSEMVPGAADCNITADSNVYPQADAVIVHHWDIMRTPSANLPPPTRPQGQRWIWFSMESPSNCRHLEALDGYFNLTMSYRSDSDIFTPYGWLEPWSGQPAHPPLNLSAKTELVAWAVSNWEPGSARVRYYQSLQAHLKVDVYGRSHKPLPQGTMMETLSRYKFYLAFENSLHPDYITEKLWRNALEAWAVPVVLAPSRSNYERFLPPDAFIHVDDFQSPKDLARYLQELDKDHARYLSYFRWRETLRPRSFSWALDFCKACWKLQQESRYQTVRSIAAWFN.

Over 1–15 the chain is Cytoplasmic; that stretch reads MDLLGAAKPQWPWRR. A helical; Signal-anchor for type II membrane protein transmembrane segment spans residues 16–34; the sequence is CLAGLLFQLLVAVCFFSYL. The Lumenal segment spans residues 35-374; the sequence is RVSRDDATGS…TVRSIAAWFN (340 aa). N-linked (GlcNAc...) asparagine glycosylation is found at asparagine 60, asparagine 105, asparagine 167, and asparagine 198.

It belongs to the glycosyltransferase 10 family.

The protein localises to the golgi apparatus. It localises to the golgi stack membrane. It catalyses the reaction a beta-D-galactosyl-(1-&gt;3)-N-acetyl-beta-D-glucosaminyl derivative + GDP-beta-L-fucose = a beta-D-galactosyl-(1-&gt;3)-[alpha-L-fucosyl-(1-&gt;4)]-N-acetyl-beta-D-glucosaminyl derivative + GDP + H(+). It carries out the reaction an N-acetyl-alpha-neuraminyl-(2-&gt;3)-beta-D-galactosyl-(1-&gt;4)-N-acetyl-beta-D-glucosaminyl derivative + GDP-beta-L-fucose = an alpha-Neu5Ac-(2-&gt;3)-beta-D-Gal-(1-&gt;4)-[alpha-L-Fuc-(1-&gt;3)]-beta-D-GlcNAc derivative + GDP + H(+). The enzyme catalyses an alpha-Neu5Ac-(2-&gt;3)-beta-D-Gal-(1-&gt;4)-beta-D-GlcNAc-(1-&gt;3)-beta-D-Gal-(1-&gt;4)-[alpha-L-Fuc-(1-&gt;3)]-beta-D-GlcNAc derivative + GDP-beta-L-fucose = an alpha-Neu5Ac-(2-&gt;3)-beta-D-Gal-(1-&gt;4)-[alpha-L-Fuc-(1-&gt;3)]-beta-D-GlcNAc-(1-&gt;3)-beta-D-Gal-(1-&gt;4)-[alpha-L-Fuc-(1-&gt;3)]-beta-D-GlcNAc derivative + GDP + H(+). The catalysed reaction is a beta-D-galactosyl-(1-&gt;4)-N-acetyl-beta-D-glucosaminyl derivative + GDP-beta-L-fucose = a beta-D-galactosyl-(1-&gt;4)-[alpha-L-fucosyl-(1-&gt;3)]-N-acetyl-beta-D-glucosaminyl derivative + GDP + H(+). It catalyses the reaction a neolactoside nLc4Cer + GDP-beta-L-fucose = a neolactoside III(3)-alpha-Fuc-nLc4Cer + GDP + H(+). It carries out the reaction a neolactoside nLc6Cer + GDP-beta-L-fucose = beta-D-galactosyl-(1-&gt;4)-N-acetyl-beta-D-glucosaminyl-(1-&gt;3)-beta-D-galactosyl-(1-&gt;4)-[alpha-L-fucosyl-(1-&gt;3)]-N-acetyl-beta-D-glucosaminyl-(1-&gt;3)-beta-D-galactosyl-(1-&gt;4)-beta-D-glucosyl-(1&lt;-&gt;1')-ceramide + GDP + H(+). The enzyme catalyses a neolactoside nLc6Cer(d18:1(4E)) + GDP-beta-L-fucose = a neolactoside III(3)-alpha-Fuc-nLc6Cer(d18:1(4E)) + GDP + H(+). The catalysed reaction is a neolactoside nLc4Cer(d18:1(4E)) + GDP-beta-L-fucose = a neolactoside III(3)-alpha-Fuc-nLc4Cer(d18:1(4E)) + GDP + H(+). It catalyses the reaction a neolactoside VI(3)-alpha-NeuNAc-nLc6Cer + GDP-beta-L-fucose = a neolactoside VI(3)-alpha-NeuAc,III(3)-alphaFuc-nLc6Cer + GDP + H(+). It carries out the reaction beta-D-galactosyl-(1-&gt;4)-N-acetyl-D-glucosamine + GDP-beta-L-fucose = beta-D-galactosyl-(1-&gt;4)-[alpha-L-fucosyl-(1-&gt;3)]-N-acetyl-D-glucosamine + GDP + H(+). The enzyme catalyses N-acetyl-alpha-neuraminosyl-(2-&gt;3)-beta-D-galactosyl-(1-&gt;4)-N-acetyl-beta-D-glucosamine + GDP-beta-L-fucose = N-acetyl-alpha-neuraminosyl-(2-&gt;3)-beta-D-galactosyl-(1-&gt;4)-[alpha-L-fucosyl-(1-&gt;3)]-N-acetyl-beta-D-glucosamine + GDP + H(+). The catalysed reaction is alpha-L-Fuc-(1-&gt;2)-beta-D-Gal-(1-&gt;4)-D-GlcNAc + GDP-beta-L-fucose = alpha-L-Fuc-(1-&gt;2)-beta-D-Gal-(1-&gt;4)-[alpha-L-Fuc-(1-&gt;3)]-D-GlcNAc + GDP + H(+). It catalyses the reaction an alpha-Neu5Ac-(2-&gt;3)-beta-D-Gal-(1-&gt;3)-D-GlcNAc derivative + GDP-beta-L-fucose = an alpha-Neu5Ac-(2-&gt;3)-beta-D-Gal-(1-&gt;3)-[alpha-L-Fuc-(1-&gt;4)]-beta-D-GlcNAc derivative + GDP + H(+). It functions in the pathway protein modification; protein glycosylation. Functionally, catalyzes preferentially the transfer of L-fucose, from a guanosine diphosphate-beta-L-fucose, to the N-acetyl-beta-D-glucosamine (GlcNAc) of an N-acetyllactosamine unit (type 2 chain) of an oligosaccharide, or a glycoprotein- and a glycolipid-linked N-acetyllactosamine unit via an alpha (1,3) linkage and participates in the surface expression of VIM-2, Lewis X/SSEA-1 and sialyl Lewis X antigens. Preferentially transfers fucose to the GlcNAc of an internal N-acetyllactosamine unit of a poly-N-acetyllactosamine chain acceptor substrate. Also catalyzes to a lesser extend the transfer of L-fucose to the GlcNAc of a type 1 (beta-D-galactosyl-(1-&gt;3)-N-acetyl-beta-D-glucosaminyl) or H-type 1 (alpha-L-Fuc-(1-&gt;2)-beta-D-Gal-(1-&gt;3)-D-GlcNAc) chain oligosaccharide via an alpha (1,4) linkage. Preferentially catalyzes sialylated type 2 oligosaccharide acceptors over neutral type 2 or H type 2 (alpha-L-Fuc-(1-&gt;2)-beta-D-Gal-(1-&gt;4)-D-GlcNAc) oligosaccharide acceptors. Lactose-based structures are also acceptor substrates. The chain is 4-galactosyl-N-acetylglucosaminide 3-alpha-L-fucosyltransferase FUT5 from Hylobates lar (Lar gibbon).